A 121-amino-acid polypeptide reads, in one-letter code: Large ribosomal subunit protein eL8 (121 aa).

The protein belongs to the eukaryotic ribosomal protein eL8 family. Part of the 50S ribosomal subunit. Probably part of the RNase P complex.

It localises to the cytoplasm. Functionally, multifunctional RNA-binding protein that recognizes the K-turn motif in ribosomal RNA, the RNA component of RNase P, box H/ACA, box C/D and box C'/D' sRNAs. This is Large ribosomal subunit protein eL8 from Thermoplasma acidophilum (strain ATCC 25905 / DSM 1728 / JCM 9062 / NBRC 15155 / AMRC-C165).